Here is a 336-residue protein sequence, read N- to C-terminus: MEKLTNVQAQQEEEEEEGPLSVTKLIGGSITAKDIKLLQQASLHTVESVANATKKQLMAIPGLGGGKVEQIITEANKLVPLGFLSARTFYQMRADVVQLSTGSKELDKLLGGGIETGSITEIFGEFRCGKTQLCHTLAVTCQLPISQKGGEGKCMYIDTENTFRPERLAAIAQRYKLNESEVLDNVAFTRAHNSDQQTKLIQMAAGMLFESRYALLIVDSAMALYRSDYIGRGELAARQNHLGLFLRMLQRLADEFGVAVVITNQVTASLDGAPGMFDAKKPIGGHIMAHSSTTRLYLRKGKGETRICKIYDSPCLPESEAMFAILPDGIGDARES.

The segment covering 1–10 (MEKLTNVQAQ) has biased composition (polar residues). Residues 1 to 20 (MEKLTNVQAQQEEEEEEGPL) form a disordered region. 124–131 (GEFRCGKT) is an ATP binding site.

Belongs to the RecA family. RAD51 subfamily. As to quaternary structure, interacts with Rrp6; the interaction is required for the recruitment of spn-A to the DNA-damage response foci. Highly expressed in ovaries.

The protein resides in the nucleus. It is found in the cytoplasm. Plays an important role in homologous strand exchange, a key step in DNA repair through homologous recombination (HR). Binds to single and double-stranded DNA and exhibits DNA-dependent ATPase activity. Underwinds duplex DNA. Spindle genes are required for each of the symmetry-breaking steps that generate polarity during egg axis formation; oocyte positioning at the posterior of the cyst to generate the first AP polarity and inhibition of gurken (grk) signaling to the follicle cell layer to polarize first the AP axis and then DV axis. May have a role in female meiosis. This is DNA repair protein Rad51 homolog (spn-A) from Drosophila melanogaster (Fruit fly).